A 798-amino-acid chain; its full sequence is Cadherin-20 (798 aa).

The N-terminal stretch at 1–35 is a signal peptide; that stretch reads MWTSGRMSNAKNLFGLGVSLYFWGLMDLTTTVLSG. A propeptide spanning residues 36 to 58 is cleaved from the precursor; that stretch reads SARPLTEGPEDNLSDKLHQRMKR. The N-linked (GlcNAc...) asparagine glycan is linked to Asn47. Residues 59–618 lie on the Extracellular side of the membrane; sequence SWVWNQFFVL…AYVLPVSLSR (560 aa). Cadherin domains are found at residues 60 to 164, 165 to 273, 274 to 392, 389 to 493, and 493 to 615; these read WVWN…EPKF, LDGP…PPRF, PQKH…EPSF, EPSF…APEF, and FARF…LPVS. The short motif at 88-90 is the Cell attachment site element; it reads RGD. Asn260 carries N-linked (GlcNAc...) asparagine glycosylation. Residues Asn419, Asn460, and Asn541 are each glycosylated (N-linked (GlcNAc...) asparagine). A helical membrane pass occupies residues 619 to 639; it reads GALIAILACIFVLLVLVLLIL. The Cytoplasmic portion of the chain corresponds to 640-798; sequence SMRRQRKQPY…GATDSSGALW (159 aa).

Detected in embryonic spinal cord, in the brachial and lumbar section of motor neurons (at protein level). Detected in ventro-lateral portion of embryonic spinal cord, in the brachial and lumbar section of embryonic motor neurons. Detected in embryonic adductor motor neurons and embryonic dorsal root ganglion. Detected in the caudal half of newly generated somites and in presomitic mesoderm.

It is found in the cell membrane. Its function is as follows. Cadherins are calcium-dependent cell adhesion proteins. They preferentially interact with themselves in a homophilic manner in connecting cells; cadherins may thus contribute to the sorting of heterogeneous cell types. The sequence is that of Cadherin-20 (CDH20) from Gallus gallus (Chicken).